The primary structure comprises 366 residues: Chorismate synthase (366 aa).

Positions 48 and 54 each coordinate NADP(+). FMN is bound by residues 125–127 (RSS), 238–239 (NA), glycine 278, 293–297 (KPTSS), and arginine 319.

The protein belongs to the chorismate synthase family. Homotetramer. FMNH2 is required as a cofactor.

The catalysed reaction is 5-O-(1-carboxyvinyl)-3-phosphoshikimate = chorismate + phosphate. The protein operates within metabolic intermediate biosynthesis; chorismate biosynthesis; chorismate from D-erythrose 4-phosphate and phosphoenolpyruvate: step 7/7. Functionally, catalyzes the anti-1,4-elimination of the C-3 phosphate and the C-6 proR hydrogen from 5-enolpyruvylshikimate-3-phosphate (EPSP) to yield chorismate, which is the branch point compound that serves as the starting substrate for the three terminal pathways of aromatic amino acid biosynthesis. This reaction introduces a second double bond into the aromatic ring system. This Dechloromonas aromatica (strain RCB) protein is Chorismate synthase.